The primary structure comprises 99 residues: Integration host factor subunit alpha (99 aa).

It belongs to the bacterial histone-like protein family. Heterodimer of an alpha and a beta chain.

This protein is one of the two subunits of integration host factor, a specific DNA-binding protein that functions in genetic recombination as well as in transcriptional and translational control. The chain is Integration host factor subunit alpha (ihfA) from Mannheimia haemolytica (Pasteurella haemolytica).